The sequence spans 385 residues: Protein pelota homolog (385 aa).

Residue Lys-162 forms a Glycyl lysine isopeptide (Lys-Gly) (interchain with G-Cter in SUMO2) linkage. Ser-374, Ser-380, Ser-381, and Ser-382 each carry phosphoserine.

This sequence belongs to the eukaryotic release factor 1 family. Pelota subfamily. Component of the Pelota-HBS1L complex, also named Dom34-Hbs1 complex, composed of PELO and HBS1L. Interacts with PINK1. Interacts with ABCE1. Interacts with CNOT4. It depends on a divalent metal cation as a cofactor. As to expression, ubiquitously expressed.

Its subcellular location is the cytoplasm. Functionally, component of the Pelota-HBS1L complex, a complex that recognizes stalled ribosomes and triggers the No-Go Decay (NGD) pathway. In the Pelota-HBS1L complex, PELO recognizes ribosomes stalled at the 3' end of an mRNA and engages stalled ribosomes by destabilizing mRNA in the mRNA channel. Following mRNA extraction from stalled ribosomes by the SKI complex, the Pelota-HBS1L complex promotes recruitment of ABCE1, which drives the disassembly of stalled ribosomes, followed by degradation of damaged mRNAs as part of the NGD pathway. As part of the PINK1-regulated signaling, upon mitochondrial damage is recruited to the ribosome/mRNA-ribonucleoprotein complex associated to mitochondrial outer membrane thereby enabling the recruitment of autophagy receptors and induction of mitophagy. The chain is Protein pelota homolog from Homo sapiens (Human).